The chain runs to 154 residues: Small ribosomal subunit protein bS18 (154 aa).

Residues 1-82 (MEKKTTKKAT…PFAKYNRGYP (82 aa)) form a disordered region. Residues 8 to 19 (KATASKTTTTKK) show a composition bias toward low complexity. Over residues 20 to 32 (AAAEKTEIKETKK) the composition is skewed to basic and acidic residues. Residues 33–49 (TTTTKTSTAKKATTASV) are compositionally biased toward low complexity. A compositionally biased stretch (basic and acidic residues) spans 50-69 (EKTEVKETKKSSDNKKEFNP).

It belongs to the bacterial ribosomal protein bS18 family. Part of the 30S ribosomal subunit. Forms a tight heterodimer with protein bS6.

Binds as a heterodimer with protein bS6 to the central domain of the 16S rRNA, where it helps stabilize the platform of the 30S subunit. This is Small ribosomal subunit protein bS18 from Malacoplasma penetrans (strain HF-2) (Mycoplasma penetrans).